A 503-amino-acid chain; its full sequence is Transcriptional regulator LovE (503 aa).

A DNA-binding region (zn(2)-C6 fungal-type) is located at residues 35 to 67 (CDRCHAQKIKCTGNKEVTGRAPCQRCQQAGLRC). Disordered regions lie at residues 89 to 124 (ADPDPCLHMSSPPVPSQSLPLDVSESHSSNTSRQFL) and 331 to 358 (SHMSPLEGSRSQSPSRDDTSSSSGHSSV). A compositionally biased stretch (low complexity) spans 339–357 (SRSQSPSRDDTSSSSGHSS).

The protein localises to the nucleus. Its function is as follows. Transcription factor that regulates the expression of the he gene cluster that mediates the biosynthesis of lovastatin (also known as mevinolin, mevacor or monacolin K), a hypolipidemic inhibitor of (3S)-hydroxymethylglutaryl-coenzyme A (HMG-CoA) reductase (HMGR). The polypeptide is Transcriptional regulator LovE (Aspergillus terreus).